A 299-amino-acid polypeptide reads, in one-letter code: MAQDEKDIVGSIEFLEVVGLEGSTYKLKGPNGEEVKLNQSEINDEDELQIGEEYSFFVYPNRSGALFATQNMPDITTNKYDFVKVLKTDRDGAHVDVGLPREVLIPWEDLPKVKDVWPVQGDELFVTLRIDRDNNMFARLATETIVEQMYTPVFDDEKQNQVIEARPYRLLRIGSFLLSKYGYKIFVHETERKEEPRLGENVSVRIIGHNEKGELNGSFLPLAHERLDDDGQHIFDLLVEYDGELPFSDKSSPEAIKEIFNMSKGSFKRAIGHLYKNKIITIESGKIALTQKGWGRIEK.

Belongs to the CvfB family.

The protein is Conserved virulence factor B (cvfB) of Staphylococcus saprophyticus subsp. saprophyticus (strain ATCC 15305 / DSM 20229 / NCIMB 8711 / NCTC 7292 / S-41).